The sequence spans 450 residues: Glucose-6-phosphate isomerase (450 aa).

Residue Glu-290 is the Proton donor of the active site. Active-site residues include His-311 and Lys-425.

This sequence belongs to the GPI family.

It localises to the cytoplasm. It carries out the reaction alpha-D-glucose 6-phosphate = beta-D-fructose 6-phosphate. Its pathway is carbohydrate biosynthesis; gluconeogenesis. It participates in carbohydrate degradation; glycolysis; D-glyceraldehyde 3-phosphate and glycerone phosphate from D-glucose: step 2/4. Its function is as follows. Catalyzes the reversible isomerization of glucose-6-phosphate to fructose-6-phosphate. The protein is Glucose-6-phosphate isomerase of Leuconostoc mesenteroides subsp. mesenteroides (strain ATCC 8293 / DSM 20343 / BCRC 11652 / CCM 1803 / JCM 6124 / NCDO 523 / NBRC 100496 / NCIMB 8023 / NCTC 12954 / NRRL B-1118 / 37Y).